The chain runs to 423 residues: AP-1 complex subunit mu-2 (423 aa).

Residues 168-421 (KNEVFIDVIE…ITQSGDYQLR (254 aa)) enclose the MHD domain.

The protein belongs to the adaptor complexes medium subunit family. Adaptor protein complex 1 (AP-1) is a heterotetramer composed of two large adaptins (gamma-type subunit AP1G1 and beta-type subunit AP1B1), a medium adaptin (mu-type subunit AP1M1 or AP1M2) and a small adaptin (sigma-type subunit AP1S1 or AP1S2 or AP1S3). Interacts with P2X4. In terms of processing, phosphorylation of membrane-bound AP1M1/AP1M2 increases its affinity for sorting signals.

The protein resides in the cytoplasmic vesicle. It is found in the clathrin-coated vesicle membrane. Its subcellular location is the golgi apparatus. Subunit of clathrin-associated adaptor protein complex 1 that plays a role in protein sorting in the trans-Golgi network (TGN) and endosomes. The AP complexes mediate the recruitment of clathrin to membranes and the recognition of sorting signals within the cytosolic tails of transmembrane cargo molecules. This is AP-1 complex subunit mu-2 from Bos taurus (Bovine).